A 208-amino-acid chain; its full sequence is MTKGILGKKVGMTQIFTESGEFIPVTVIEATPNVVLQVKTVETDGYEAVQVGFDDKREVLSNKPAKGHVAKANTAPKRFIREFKNIEGLEVGAELSVEQFEAGDVVDVTGISKGKGFQGVIKRHGQSRGPMAHGSRYHRRPGSMGPVAPNRVFKNKRLAGRMGGNRVTVQNLEIVQVIPEKNVILVKGNVPGAKKSLITIKSAVKAAK.

Residues 122-148 are disordered; it reads KRHGQSRGPMAHGSRYHRRPGSMGPVA.

Belongs to the universal ribosomal protein uL3 family. As to quaternary structure, part of the 50S ribosomal subunit. Forms a cluster with proteins L14 and L19.

Its function is as follows. One of the primary rRNA binding proteins, it binds directly near the 3'-end of the 23S rRNA, where it nucleates assembly of the 50S subunit. The sequence is that of Large ribosomal subunit protein uL3 from Streptococcus pyogenes serotype M1.